The sequence spans 177 residues: Large ribosomal subunit protein uL6 (177 aa).

It belongs to the universal ribosomal protein uL6 family. In terms of assembly, part of the 50S ribosomal subunit.

This protein binds to the 23S rRNA, and is important in its secondary structure. It is located near the subunit interface in the base of the L7/L12 stalk, and near the tRNA binding site of the peptidyltransferase center. The protein is Large ribosomal subunit protein uL6 of Rhodospirillum centenum (strain ATCC 51521 / SW).